A 796-amino-acid chain; its full sequence is YY1-associated protein 1 (796 aa).

Disordered stretches follow at residues 1–45 (MEEE…ATPS) and 463–488 (IQPS…SEAP). A compositionally biased stretch (basic and acidic residues) spans 23–36 (PPDKREGSAVDPGK). Over residues 463–472 (IQPSPSLQPS) the composition is skewed to low complexity. Polar residues predominate over residues 473–485 (FNPGKTPAQSTHS). At Ser724 the chain carries Phosphoserine. The interval 755 to 776 (RQALEPLPQGIQESLNNSSPGD) is disordered. Polar residues predominate over residues 765–774 (IQESLNNSSP).

In terms of assembly, interacts with YY1. Interacts with MAD2L2. Interacts with INO80. As to expression, ubiquitous. Detected in small intestine, skeletal muscle, lung, pancreas, brain, stomach, spleen, colon and heart. Detected at very low levels in healthy liver. Highly expressed in most liver carcinomas.

It localises to the cytoplasm. The protein resides in the nucleus. The protein localises to the nucleoplasm. It is found in the nucleolus. In terms of biological role, associates with the INO80 chromatin remodeling complex, which is responsible for transcriptional regulation, DNA repair, and replication. Enhances transcription activation by YY1. Plays a role in cell cycle regulation. This chain is YY1-associated protein 1, found in Homo sapiens (Human).